We begin with the raw amino-acid sequence, 307 residues long: UPF0276 protein HI_1600 (307 aa).

The protein belongs to the UPF0276 family.

The polypeptide is UPF0276 protein HI_1600 (Haemophilus influenzae (strain ATCC 51907 / DSM 11121 / KW20 / Rd)).